The following is a 168-amino-acid chain: ATP synthase subunit b (168 aa).

Residues 7–26 (FVLSNFIFTLINLWIMYWVL) form a helical membrane-spanning segment.

Belongs to the ATPase B chain family. F-type ATPases have 2 components, F(1) - the catalytic core - and F(0) - the membrane proton channel. F(1) has five subunits: alpha(3), beta(3), gamma(1), delta(1), epsilon(1). F(0) has three main subunits: a(1), b(2) and c(10-14). The alpha and beta chains form an alternating ring which encloses part of the gamma chain. F(1) is attached to F(0) by a central stalk formed by the gamma and epsilon chains, while a peripheral stalk is formed by the delta and b chains.

It localises to the cell membrane. Its function is as follows. F(1)F(0) ATP synthase produces ATP from ADP in the presence of a proton or sodium gradient. F-type ATPases consist of two structural domains, F(1) containing the extramembraneous catalytic core and F(0) containing the membrane proton channel, linked together by a central stalk and a peripheral stalk. During catalysis, ATP synthesis in the catalytic domain of F(1) is coupled via a rotary mechanism of the central stalk subunits to proton translocation. Functionally, component of the F(0) channel, it forms part of the peripheral stalk, linking F(1) to F(0). The sequence is that of ATP synthase subunit b from Alkaliphilus metalliredigens (strain QYMF).